We begin with the raw amino-acid sequence, 249 residues long: Triosephosphate isomerase (249 aa).

Position 9–11 (9–11 (NWK)) interacts with substrate. The active-site Electrophile is H94. Catalysis depends on E166, which acts as the Proton acceptor. Residues G172, S214, and 235–236 (GG) contribute to the substrate site.

It belongs to the triosephosphate isomerase family. Homodimer.

The protein resides in the cytoplasm. The enzyme catalyses D-glyceraldehyde 3-phosphate = dihydroxyacetone phosphate. It participates in carbohydrate biosynthesis; gluconeogenesis. Its pathway is carbohydrate degradation; glycolysis; D-glyceraldehyde 3-phosphate from glycerone phosphate: step 1/1. Functionally, involved in the gluconeogenesis. Catalyzes stereospecifically the conversion of dihydroxyacetone phosphate (DHAP) to D-glyceraldehyde-3-phosphate (G3P). This Leptospira biflexa serovar Patoc (strain Patoc 1 / Ames) protein is Triosephosphate isomerase.